The sequence spans 919 residues: WD repeat-containing protein 47 (919 aa).

Positions 10 to 42 (KEVEIIKLILDFLNSKKLHISMLALEKESGVIN) constitute a LisH domain. The CTLH domain maps to 45–102 (FSDDMLFLRQLILDGQWDEVLQFIQPLECMEKFDKKRFRYIILKQKFLEALCVNNAMS). Thr285 bears the Phosphothreonine mark. Ser289, Ser292, Ser297, and Ser312 each carry phosphoserine. Positions 393 to 421 (GQSSVSEKEPANGAQNPGPAKQEKNELRD) are disordered. Ser422 bears the Phosphoserine mark. The interval 500–590 (LNQQCNGSKG…SLSRSKGEED (91 aa)) is disordered. Positions 517–551 (VTSFTTPPQDSSQRLTHDASNIHTSTPRNPGSTNH) are enriched in polar residues. At Thr542 the chain carries Phosphothreonine. 7 WD repeats span residues 604 to 643 (EDTQ…DPSA), 659 to 698 (HHKG…CNAT), 706 to 748 (MHDG…GQGL), 753 to 791 (GHTG…CVRV), 798 to 837 (GTGS…MVQS), 840 to 879 (PHSS…TKQL), and 886 to 918 (EHKD…WTYN).

Interacts with MAP1S (via WD repeats).

The protein localises to the cytoplasm. It localises to the cytoskeleton. The chain is WD repeat-containing protein 47 (WDR47) from Homo sapiens (Human).